The sequence spans 157 residues: Class 10 plant pathogenesis-related protein 2E (157 aa).

Asp8 provides a ligand contact to trans-zeatin. 3 residues coordinate Ca(2+): Pro32, Val35, and Ile38. Trans-zeatin-binding residues include Glu60, His69, Tyr81, and Tyr83.

The protein belongs to the BetVI family.

Its subcellular location is the cytoplasm. The protein resides in the cytosol. In terms of biological role, class II ribonuclease (RNase). Binds to cytokinins. Interacts with melatonin. The protein is Class 10 plant pathogenesis-related protein 2E of Lupinus luteus (European yellow lupine).